Here is a 356-residue protein sequence, read N- to C-terminus: MSPCGRARRHTSRGAMAVLAWKFPRTRLPVGASALCVVVLCWLYVFPVYRLPDEKEIVQGVLQQGTAWRRNRTAAGIFRKQMEDCCDPAHLFAMTKMNAPMGKSLWYDGEFLYSFTIDNSTYSLFPQATPFQLPLKKCAVVGNGGILKKSGCGRQIDEADFVMRCNLPPLSSEYTKDVGSKSHLVTANPSIIRQRFQNLLWSRKTFVDHMKVYNHSYIYMPAFSMKTGTEPSLRVYYTLSDVGANQTVLFANPNFLRSIGKFWKSRGIHAKRLSTGLFLVSAALGLCEEVAIYGFWPFSVNMHEQPISHHYYDNVLPFSGFHAMPEEFLQLWYLHKIGALRMQLDPCEDNSLQPTS.

At 1–29 (MSPCGRARRHTSRGAMAVLAWKFPRTRLP) the chain is on the cytoplasmic side. A helical; Signal-anchor for type II membrane protein membrane pass occupies residues 30–48 (VGASALCVVVLCWLYVFPV). The Lumenal segment spans residues 49–356 (YRLPDEKEIV…CEDNSLQPTS (308 aa)). N-linked (GlcNAc...) asparagine glycosylation is found at N71 and N119. An intrachain disulfide couples C138 to C287. CMP-N-acetyl-beta-neuraminate-binding residues include N143 and N166. N-linked (GlcNAc...) asparagine glycosylation is found at N214 and N245. S274, T275, G276, W296, and H310 together coordinate CMP-N-acetyl-beta-neuraminate.

Belongs to the glycosyltransferase 29 family.

It localises to the golgi apparatus membrane. The enzyme catalyses an N-acetyl-alpha-neuraminyl-(2-&gt;3)-beta-D-galactosyl derivative + CMP-N-acetyl-beta-neuraminate = an N-acetyl-alpha-neuraminyl-(2-&gt;8)-N-acetyl-alpha-neuraminyl-(2-&gt;3)-beta-D-galactosyl derivative + CMP + H(+). It catalyses the reaction a ganglioside GM3 (d18:1(4E)) + CMP-N-acetyl-beta-neuraminate = a ganglioside GD3 (d18:1(4E)) + CMP + H(+). The catalysed reaction is a ganglioside GD3 (d18:1(4E)) + CMP-N-acetyl-beta-neuraminate = a ganglioside GT3 (d18:1(4E)) + CMP + H(+). It carries out the reaction a ganglioside GD1a (d18:1(4E)) + CMP-N-acetyl-beta-neuraminate = a ganglioside GT1a (d18:1(4E)) + CMP + H(+). The enzyme catalyses a ganglioside GT1b (d18:1(4E)) + CMP-N-acetyl-beta-neuraminate = a ganglioside GQ1b (d18:1(4E)) + CMP + H(+). It catalyses the reaction a ganglioside GM1b (d18:1(4E)) + CMP-N-acetyl-beta-neuraminate = a ganglioside GD1c (d18:1(4E)) + CMP + H(+). The catalysed reaction is a ganglioside GD3 + CMP-N-acetyl-beta-neuraminate = a ganglioside GT3 + CMP + H(+). It carries out the reaction [alpha-N-acetylneuraminyl-(2-&gt;8)](n)-alpha-N-acetylneuraminyl-(2-&gt;8)-alpha-N-acetylneuraminyl-(2-&gt;3)-beta-D-galactosyl-(1-&gt;4)-beta-D-glucosyl-(1&lt;-&gt;1)-ceramide + CMP-N-acetyl-beta-neuraminate = [alpha-N-acetylneuraminyl-(2-&gt;8)](n+1)-alpha-N-acetylneuraminyl-(2-&gt;8)-alpha-N-acetylneuraminyl-(2-&gt;3)-beta-D-galactosyl-(1-&gt;4)-beta-D-glucosyl-(1&lt;-&gt;1)-ceramide + CMP + H(+). Its pathway is protein modification; protein glycosylation. It functions in the pathway lipid metabolism; sphingolipid metabolism. Its function is as follows. Catalyzes the addition of sialic acid in alpha 2,8-linkage to the sialic acid moiety of the ganglioside GM3 to form ganglioside GD3; gangliosides are a subfamily of complex glycosphingolipds that contain one or more residues of sialic acid. Can catalyze the addition of a second alpha-2,8- sialic acid to GD3 to form GT3. Can use GM1b, GD1a and GT1b as acceptor substrates to synthesize GD1c, GT1a and GQ1b respectively. The protein is Alpha-N-acetylneuraminide alpha-2,8-sialyltransferase of Bos taurus (Bovine).